Here is a 232-residue protein sequence, read N- to C-terminus: Charged multivesicular body protein 4c (232 aa).

Disordered stretches follow at residues 1 to 23 (MSKL…PSAQ) and 172 to 232 (EQEE…AWAT). The tract at residues 1-153 (MSKLGKFFKG…EISEAFSQRV (153 aa)) is intramolecular interaction with C-terminus. Positions 11 to 23 (SRSSRARAAPSAQ) are enriched in low complexity. Coiled coils occupy residues 21–50 (SAQE…IQRE) and 125–182 (LNKI…KMTS). The tract at residues 154–232 (QFADGFDEDE…DFKQLAAWAT (79 aa)) is intramolecular interaction with N-terminus. S210 carries the post-translational modification Phosphoserine; by AURKB.

This sequence belongs to the SNF7 family. Probable core component of the endosomal sorting required for transport complex III (ESCRT-III). ESCRT-III components are thought to multimerize to form a flat lattice on the perimeter membrane of the endosome. Several assembly forms of ESCRT-III may exist that interact and act sequentially. Self-associates. Interacts with CHMP2A. Interacts with CHMP4A. Interacts with CHMP4B. Interacts with CHMP6. Interacts with VPS4A. Interacts with PDCD6IP; the interaction is direct. Phosphorylated at Ser-210 by AURKB during cytokinesis: together with ZFYVE19/ANCHR, phosphorylated CHMP4C retains abscission-competent VPS4 (VPS4A and/or VPS4B) at the midbody ring until abscission checkpoint signaling is terminated at late cytokinesis.

It localises to the cytoplasm. The protein localises to the cytosol. The protein resides in the late endosome membrane. It is found in the midbody. Its subcellular location is the midbody ring. Functionally, probable core component of the endosomal sorting required for transport complex III (ESCRT-III) which is involved in multivesicular bodies (MVBs) formation and sorting of endosomal cargo proteins into MVBs. MVBs contain intraluminal vesicles (ILVs) that are generated by invagination and scission from the limiting membrane of the endosome and mostly are delivered to lysosomes enabling degradation of membrane proteins, such as stimulated growth factor receptors, lysosomal enzymes and lipids. The MVB pathway appears to require the sequential function of ESCRT-O, -I,-II and -III complexes. ESCRT-III proteins mostly dissociate from the invaginating membrane before the ILV is released. The ESCRT machinery also functions in topologically equivalent membrane fission events, such as the terminal stages of cytokinesis. Key component of the cytokinesis checkpoint, a process required to delay abscission to prevent both premature resolution of intercellular chromosome bridges and accumulation of DNA damage: upon phosphorylation by AURKB, together with ZFYVE19/ANCHR, retains abscission-competent VPS4 (VPS4A and/or VPS4B) at the midbody ring until abscission checkpoint signaling is terminated at late cytokinesis. Deactivation of AURKB results in dephosphorylation of CHMP4C followed by its dissociation from ANCHR and VPS4 and subsequent abscission. ESCRT-III proteins are believed to mediate the necessary vesicle extrusion and/or membrane fission activities, possibly in conjunction with the AAA ATPase VPS4. CHMP4A/B/C are required for the exosomal release of SDCBP, CD63 and syndecan. The sequence is that of Charged multivesicular body protein 4c (Chmp4c) from Rattus norvegicus (Rat).